The chain runs to 70 residues: Mu-conotoxin-like Am3.4 (70 aa).

An N-terminal signal peptide occupies residues 1–20; it reads MMYKLGVLLIICLLLFPLTA. Residues 21–53 constitute a propeptide that is removed on maturation; it reads VPQDGDQPADRPAERMQDDISFEHDRFFDPVKR. Intrachain disulfides connect Cys54/Cys69, Cys55/Cys65, and Cys61/Cys68. Pro67 bears the 4-hydroxyproline; partial; in major form mark. Cys69 is modified (cysteine amide).

It belongs to the conotoxin M superfamily. Post-translationally, contains 3 disulfide bonds. As to expression, expressed by the venom duct.

Its subcellular location is the secreted. Mu-conotoxins block voltage-gated sodium channels (Nav). The sequence is that of Mu-conotoxin-like Am3.4 from Conus amadis (Amadis cone).